Consider the following 81-residue polypeptide: RNA-binding protein Hfq (81 aa).

The 60-residue stretch at 10–69 folds into the Sm domain; it reads DPFLNTLRKEHIPVSIYLVNGIKLQGHIDSFDQYVVLLKNTVTQMVYKHAISTVVPARAV.

Belongs to the Hfq family. As to quaternary structure, homohexamer.

In terms of biological role, RNA chaperone that binds small regulatory RNA (sRNAs) and mRNAs to facilitate mRNA translational regulation in response to envelope stress, environmental stress and changes in metabolite concentrations. Also binds with high specificity to tRNAs. This is RNA-binding protein Hfq from Nitrosospira multiformis (strain ATCC 25196 / NCIMB 11849 / C 71).